The sequence spans 179 residues: MKQFLDFLPLVVFFAFYKLYDIYAATTALIVATAIVLIYTWIRYRKVEKMALITFVLVAVFGGLTVFFHNDEFIKWKVTVIYGLFAGALLFSQWVMNKPLIQRMLGKEITLPQEVWSRLNIAWAVFFILCGLANIYIAFWMPQNIWVNFKVFGLTALTLIFTLLSGVYIYKHMPQDDKH.

5 consecutive transmembrane segments (helical) span residues 22–42 (IYAA…YTWI), 50–70 (MALI…FFHN), 76–96 (WKVT…QWVM), 121–141 (IAWA…AFWM), and 149–169 (FKVF…GVYI).

It belongs to the YciB family.

Its subcellular location is the cell inner membrane. Plays a role in cell envelope biogenesis, maintenance of cell envelope integrity and membrane homeostasis. This chain is Inner membrane-spanning protein YciB, found in Enterobacter sp. (strain 638).